We begin with the raw amino-acid sequence, 109 residues long: uncharacterized protein (109 aa).

To E.coli YtfG C-terminal region.

This is an uncharacterized protein from Haemophilus influenzae (strain ATCC 51907 / DSM 11121 / KW20 / Rd).